The following is a 373-amino-acid chain: MYIPPSDPRRPAKVTAGQLCELCHARKALVKRPKNLQKVCKLCFFHVFETEIHNTIMENKLFQRGERVAVGASGGKDSTVLAYILKLLNERHDYGLEIVLLSIDEGIVGYRDDSLATVKRNQEQYGLPLKIVSYKDLYDWTMDEIVACAGMRNSCTYCGVFRRQALDRGAAMLDIHHVVTGHNADDMAETVLMNILRGDVARLEKSTAILTQSSGSPVKRSKPFKYAYQKEIVLYAHYKKLDYFSTECSYAPEAFRGTARELMKNLEAVRPSCIIDIIHSGEALRLRPRPKKRAPPPGSVEIRADGSASLFRNEGFVDGNRCERCGYLSSNRICKACMLLEGLEKNRARVQIADDTSTEGAARLTRTLEKLHF.

Belongs to the TtcA family. CTU1/NCS6/ATPBD3 subfamily.

It localises to the cytoplasm. Its pathway is tRNA modification; 5-methoxycarbonylmethyl-2-thiouridine-tRNA biosynthesis. In terms of biological role, plays a central role in 2-thiolation of mcm(5)S(2)U at tRNA wobble positions of tRNA(Lys), tRNA(Glu) and tRNA(Gln). Directly binds tRNAs and probably acts by catalyzing adenylation of tRNAs, an intermediate required for 2-thiolation. It is unclear whether it acts as a sulfurtransferase that transfers sulfur from thiocarboxylated URM1 onto the uridine of tRNAs at wobble position. Prior mcm(5) tRNA modification by the elongator complex is required for 2-thiolation. May also be involved in protein urmylation. The polypeptide is Cytoplasmic tRNA 2-thiolation protein 1 (Eremothecium gossypii (strain ATCC 10895 / CBS 109.51 / FGSC 9923 / NRRL Y-1056) (Yeast)).